The sequence spans 487 residues: Adenosylhomocysteinase (487 aa).

The substrate site is built by Thr-76, Asp-151, and Glu-212. An NAD(+)-binding site is contributed by 213–215; it reads TTT. Residues Lys-242 and Asp-246 each coordinate substrate. Residues Asn-247, 276–281, Glu-299, Asn-334, 355–357, and Asn-403 each bind NAD(+); these read GYGDVG and IGH.

It belongs to the adenosylhomocysteinase family. NAD(+) is required as a cofactor.

It localises to the cytoplasm. It catalyses the reaction S-adenosyl-L-homocysteine + H2O = L-homocysteine + adenosine. It functions in the pathway amino-acid biosynthesis; L-homocysteine biosynthesis; L-homocysteine from S-adenosyl-L-homocysteine: step 1/1. Functionally, may play a key role in the regulation of the intracellular concentration of adenosylhomocysteine. This chain is Adenosylhomocysteinase, found in Bacteroides fragilis (strain YCH46).